The following is a 406-amino-acid chain: MECALDAQSLISISLRKIHSSRTQRGGIKLHKNLLVSYVLRNARQLYLSERYAELYRRQQQQQQQQPPHHQHQHLAYAAPGMPASAADFGPLQLGGGGDAEAREPVARHQLHQLHQLHQLHLQQQLHQHQHPAPRGCTAAAPVAVAGAPAGCAGALSELPGCAALQPPHGAPHRGQHLEPLQPGPAPLPPPAPAALCPRDPRVPAACSAPSVLPGAAPSTVAASSPPASTAPSSSTGFYRGAYPAPSDFGVHCSSQTTVLDLDTHVVTTVENGYLHQDCCASAHCPCCGQGAPGPGLASAAGCKRKYYPGQEEEDDEEDAGDLGAEPPGGTPFAPCKRARFEDFCPDSSPDASNISNLISIFGSGFSGLVSRQPDSSEQPPPLNGQLCAKQALASLGAWTRAIVAF.

Disordered regions lie at residues 166–195 (QPPH…APAA) and 216–235 (AAPS…PSSS). Residues 182–193 (QPGPAPLPPPAP) show a composition bias toward pro residues.

The protein belongs to the IER family.

The polypeptide is Immediate early response gene 5-like protein (Ier5l) (Mus musculus (Mouse)).